The primary structure comprises 260 residues: uncharacterized protein (260 aa).

This is an uncharacterized protein from Saccharomyces cerevisiae (strain ATCC 204508 / S288c) (Baker's yeast).